A 258-amino-acid chain; its full sequence is Phosphate import ATP-binding protein PstB (258 aa).

The region spanning 12–253 is the ABC transporter domain; it reads IEVKNLNFYY…PARKETEDYI (242 aa). 44 to 51 is an ATP binding site; the sequence is GPSGCGKS.

This sequence belongs to the ABC transporter superfamily. Phosphate importer (TC 3.A.1.7) family. As to quaternary structure, the complex is composed of two ATP-binding proteins (PstB), two transmembrane proteins (PstC and PstA) and a solute-binding protein (PstS).

The protein localises to the cell inner membrane. It carries out the reaction phosphate(out) + ATP + H2O = ADP + 2 phosphate(in) + H(+). Functionally, part of the ABC transporter complex PstSACB involved in phosphate import. Responsible for energy coupling to the transport system. This Bordetella avium (strain 197N) protein is Phosphate import ATP-binding protein PstB.